The chain runs to 514 residues: Monocarboxylate transporter 10 (514 aa).

Positions 1–64 (MVPSQEEPAA…TGNQEPPEPP (64 aa)) are disordered. Over 1–65 (MVPSQEEPAA…GNQEPPEPPE (65 aa)) the chain is Cytoplasmic. Residues 66-86 (GGWGWLVMLAAMWCNGSVFGI) traverse the membrane as a helical segment. The Extracellular segment spans residues 87–113 (QNAYGVLFVSMLETFGAKDDDNMAFKA). A helical membrane pass occupies residues 114 to 134 (AWVGSLSMGMIFFCCPIVSVF). The Cytoplasmic portion of the chain corresponds to 135–143 (TDMFGCRRT). A helical transmembrane segment spans residues 144–164 (AVLGAAVGFVGLMSSSFVSSI). The Extracellular portion of the chain corresponds to 165-170 (EPLYFT). A helical membrane pass occupies residues 171-191 (YGVVFACGCSFAYQPSLVILG). Residues 192–199 (HYFKKRLG) lie on the Cytoplasmic side of the membrane. Residues 200–220 (LVNGIVTAGSSVFTILLPLLL) form a helical membrane-spanning segment. Residues 221–227 (GNLTSTV) lie on the Extracellular side of the membrane. A helical membrane pass occupies residues 228–248 (GLCYTLRILCIFMFVLFLAGF). Residues 249–290 (TYRPLVPSSKEKESEDSRSSFFSRRKLSPPKKIFNFALFKET) lie on the Cytoplasmic side of the membrane. At Ser-262 the chain carries Phosphoserine. A helical transmembrane segment spans residues 291–311 (AYAVWAAGIPLALFGYFVPYV). At 312–328 (HLMNHVKERFKDVNNKE) the chain is on the extracellular side. Residues 329–349 (VLFMCIGVTSGVGRLLFGRIA) form a helical membrane-spanning segment. Residue Asp-350 is a topological domain, cytoplasmic. The helical transmembrane segment at 351-371 (YLPGVKKVYLQVLSFFFIGLT) threads the bilayer. Residues 372–395 (SMMIPLCSVFGALIALCLIMGLFD) lie on the Extracellular side of the membrane. The helical transmembrane segment at 396–416 (GCFISIMAPIAFELVGPQDAS) threads the bilayer. At 417–418 (QA) the chain is on the cytoplasmic side. A helical membrane pass occupies residues 419–439 (IGFLLGFMSIPMTVGPPVAGL). Over 440–450 (LHDKLGSYDLA) the chain is Extracellular. The helical transmembrane segment at 451–471 (FYLAGIPPFIGGAVLCLIPWI) threads the bilayer. Over 472 to 514 (HSKKQREISKNTGGEKMEKMLANQSSLLSSSSGIFKKESDSII) the chain is Cytoplasmic. Ser-497, Ser-500, Ser-502, and Ser-503 each carry phosphoserine.

Belongs to the major facilitator superfamily. Monocarboxylate porter (TC 2.A.1.13) family. In terms of processing, not N-glycosylated. Strongly expressed in intestine, placenta and liver. In small intestine is detected in the basolateral membrane (at protein level).

The protein localises to the cell membrane. The protein resides in the basolateral cell membrane. It carries out the reaction L-tryptophan(in) = L-tryptophan(out). The catalysed reaction is L-tyrosine(in) = L-tyrosine(out). The enzyme catalyses L-phenylalanine(in) = L-phenylalanine(out). It catalyses the reaction 3,3',5-triiodo-L-thyronine(out) = 3,3',5-triiodo-L-thyronine(in). It carries out the reaction L-thyroxine(out) = L-thyroxine(in). In terms of biological role, sodium- and proton-independent thyroid hormones and aromatic acids transporter. Mediates both uptake and efflux of 3,5,3'-triiodothyronine (T3) and 3,5,3',5'-tetraiodothyronine (T4) with high affinity, suggesting a role in the homeostasis of thyroid hormone levels. Responsible for low affinity bidirectional transport of the aromatic amino acids, such as phenylalanine, tyrosine, tryptophan and L-3,4-dihydroxyphenylalanine (L-dopa). Plays an important role in homeostasis of aromatic amino acids. This chain is Monocarboxylate transporter 10 (Slc16a10), found in Rattus norvegicus (Rat).